We begin with the raw amino-acid sequence, 146 residues long: Holo-[acyl-carrier-protein] synthase (146 aa).

Mg(2+)-binding residues include aspartate 9 and glutamate 63.

This sequence belongs to the P-Pant transferase superfamily. AcpS family. Requires Mg(2+) as cofactor.

It is found in the cytoplasm. The enzyme catalyses apo-[ACP] + CoA = holo-[ACP] + adenosine 3',5'-bisphosphate + H(+). In terms of biological role, transfers the 4'-phosphopantetheine moiety from coenzyme A to a Ser of acyl-carrier-protein. This Burkholderia ambifaria (strain MC40-6) protein is Holo-[acyl-carrier-protein] synthase.